Consider the following 394-residue polypeptide: Probable tRNA sulfurtransferase (394 aa).

The THUMP domain occupies 61-168 (DETVATLSRI…PMINIYSEEI (108 aa)). Residues 185–186 (LL), 210–211 (YF), Arg267, Gly289, and Gln298 each bind ATP.

Belongs to the ThiI family.

It is found in the cytoplasm. It carries out the reaction [ThiI sulfur-carrier protein]-S-sulfanyl-L-cysteine + a uridine in tRNA + 2 reduced [2Fe-2S]-[ferredoxin] + ATP + H(+) = [ThiI sulfur-carrier protein]-L-cysteine + a 4-thiouridine in tRNA + 2 oxidized [2Fe-2S]-[ferredoxin] + AMP + diphosphate. The enzyme catalyses [ThiS sulfur-carrier protein]-C-terminal Gly-Gly-AMP + S-sulfanyl-L-cysteinyl-[cysteine desulfurase] + AH2 = [ThiS sulfur-carrier protein]-C-terminal-Gly-aminoethanethioate + L-cysteinyl-[cysteine desulfurase] + A + AMP + 2 H(+). The protein operates within cofactor biosynthesis; thiamine diphosphate biosynthesis. Its function is as follows. Catalyzes the ATP-dependent transfer of a sulfur to tRNA to produce 4-thiouridine in position 8 of tRNAs, which functions as a near-UV photosensor. Also catalyzes the transfer of sulfur to the sulfur carrier protein ThiS, forming ThiS-thiocarboxylate. This is a step in the synthesis of thiazole, in the thiamine biosynthesis pathway. The sulfur is donated as persulfide by IscS. The protein is Probable tRNA sulfurtransferase of Agathobacter rectalis (strain ATCC 33656 / DSM 3377 / JCM 17463 / KCTC 5835 / VPI 0990) (Eubacterium rectale).